The primary structure comprises 23 residues: Acidic phospholipase A2 Ts-A5 (23 aa).

Ca(2+) serves as cofactor. Post-translationally, contains 7 disulfide bonds. In terms of tissue distribution, expressed by the venom gland.

It is found in the secreted. It catalyses the reaction a 1,2-diacyl-sn-glycero-3-phosphocholine + H2O = a 1-acyl-sn-glycero-3-phosphocholine + a fatty acid + H(+). In terms of biological role, snake venom phospholipase A2 (PLA2) that shows a moderate inhibition of ADP-induced human platelet aggregation when tested on platelet rich plasma. Exhibits high hydrolytic activities and prefers the anionic micelles (dPPC with deoxycholate) to the zwitterionic micelles (dPPC with Triton X-100). PLA2 catalyzes the calcium-dependent hydrolysis of the 2-acyl groups in 3-sn-phosphoglycerides. In Trimeresurus stejnegeri (Chinese green tree viper), this protein is Acidic phospholipase A2 Ts-A5.